The sequence spans 203 residues: A-type ATP synthase subunit E (203 aa).

This sequence belongs to the V-ATPase E subunit family. As to quaternary structure, has multiple subunits with at least A(3), B(3), C, D, E, F, H, I and proteolipid K(x).

Its subcellular location is the cell membrane. Functionally, component of the A-type ATP synthase that produces ATP from ADP in the presence of a proton gradient across the membrane. The polypeptide is A-type ATP synthase subunit E (Thermococcus kodakarensis (strain ATCC BAA-918 / JCM 12380 / KOD1) (Pyrococcus kodakaraensis (strain KOD1))).